The chain runs to 273 residues: 4-hydroxy-tetrahydrodipicolinate reductase (273 aa).

Residues Gly12–Met17 and Glu38 contribute to the NAD(+) site. Arg39 lines the NADP(+) pocket. NAD(+) is bound by residues Gly102–Thr104 and Ala126–Phe129. The Proton donor/acceptor role is filled by His159. His160 contacts (S)-2,3,4,5-tetrahydrodipicolinate. Lys163 functions as the Proton donor in the catalytic mechanism. Gly169–Thr170 serves as a coordination point for (S)-2,3,4,5-tetrahydrodipicolinate.

It belongs to the DapB family. As to quaternary structure, homotetramer.

The protein localises to the cytoplasm. The enzyme catalyses (S)-2,3,4,5-tetrahydrodipicolinate + NAD(+) + H2O = (2S,4S)-4-hydroxy-2,3,4,5-tetrahydrodipicolinate + NADH + H(+). It carries out the reaction (S)-2,3,4,5-tetrahydrodipicolinate + NADP(+) + H2O = (2S,4S)-4-hydroxy-2,3,4,5-tetrahydrodipicolinate + NADPH + H(+). Its pathway is amino-acid biosynthesis; L-lysine biosynthesis via DAP pathway; (S)-tetrahydrodipicolinate from L-aspartate: step 4/4. In terms of biological role, catalyzes the conversion of 4-hydroxy-tetrahydrodipicolinate (HTPA) to tetrahydrodipicolinate. The chain is 4-hydroxy-tetrahydrodipicolinate reductase from Pectobacterium atrosepticum (strain SCRI 1043 / ATCC BAA-672) (Erwinia carotovora subsp. atroseptica).